The sequence spans 1053 residues: MSVDVQRITDFIWYVNSIWMLPIQIFSAIYILQKHLGLGALAALVTTLMVMACNYPLTRLQRNYQSDIMNAKDDRMKATSEILKNMKILKLQAWDNQFLNKVKTLRKKEYDCLWKSLRLQDFTTFILWGAPSLISVVTFVTCMLMGVKLTAGAVLSALATFQMLQSPIFGLPDLLSALVQSKVSADRIASYLQQSETQKDAVEYCSNDHTEFSVEIENGAFSWEPESSRPTLDDIELKVKSGMKVAICGAVGSGKSSLPSSILGEIQKLKGTVRVSGKQAYVPQSPWILSGTIRDNILFGSIYESEKYERTVKACALIKDFELFSNGDLTEIGERGINMSGGQKQRIQIARAVYQNADIYLLDDPFSAVDAHTGRELFEDCLMGILKDKTVLYVTHQVEFLPAADLILVMQNGRVMQAGKFEELLKQNIGFEVLTQCDSEHNISTENKKKEAKLVQDEETEKGVIGKEVYLTYLTTVKGGLLVPFIILAQSCFQMLQIASNYWMAWTAPPTAESIPKLGMGRILLVYALLAAGSSLCVLARTILVAIGGLSTAETFFSRMLCSIFRAPMSYFDSTPTGRILNRASTDQSVLDLEMAVKLGWCAFSIIQIVGTIFVMSQVAWQVCVIFIPVAVACVFYQRYYTPTERELSRMSGVERAPILHHFAESLAGATTIRAFDQRDRFISSNLVLIDSHSRPWFHVASAMEWLSFRLNLLSHFVFAFSLVLLVTLPEGVINPSIAGLGVTYGLSLNVLQATVIWNICNAENKMISVERILQHSKIPSEAPLVIDDQRPLDNWPNVGSIVFRDLQVRYAEHFPAVLKNITCAFPGGKKIGVVGRTGSGKSTLIQALFRIVEPSHGTIVIDNVDITKIGLHDLRSRLGIIPQDNALFDGTIRLNLDPLAQYTDREIWEALDKCQLGDVIRAKDEKLDATVVENGENWSVGQRQLVCLGRVLLKKSNILVLDEATASVDSATDGVIQKIINQEFKDRTVVTIAHRIHTVIESDLVLVLSDGRIAEFDSPAKLLQREDSFFSKLIKEYSLRSNHFAGSNDLLS.

The ABC transmembrane type-1 1 domain occupies 1–180; the sequence is MSVDVQRITD…LPDLLSALVQ (180 aa). The next 4 membrane-spanning stretches (helical) occupy residues 11-31, 36-56, 125-145, and 151-171; these read FIWY…AIYI, LGLG…CNYP, FILW…CMLM, and AGAV…IFGL. Residues 214 to 437 form the ABC transporter 1 domain; that stretch reads VEIENGAFSW…NIGFEVLTQC (224 aa). 249–256 lines the ATP pocket; the sequence is GAVGSGKS. The next 5 membrane-spanning stretches (helical) occupy residues 481–503, 523–543, 595–615, 714–734, and 738–758; these read LLVP…SNYW, ILLV…ARTI, MAVK…TIFV, LSHF…EGVI, and IAGL…TVIW. In terms of domain architecture, ABC transmembrane type-1 2 spans 483–765; that stretch reads VPFIILAQSC…VIWNICNAEN (283 aa). Residues 804–1036 enclose the ABC transporter 2 domain; sequence FRDLQVRYAE…EDSFFSKLIK (233 aa). 836–843 provides a ligand contact to ATP; sequence GRTGSGKS.

The protein belongs to the ABC transporter superfamily. ABCC family. Conjugate transporter (TC 3.A.1.208) subfamily.

It is found in the membrane. The enzyme catalyses ATP + H2O + xenobioticSide 1 = ADP + phosphate + xenobioticSide 2.. Functionally, pump for glutathione S-conjugates. This chain is Putative ABC transporter C family member 15 (ABCC15), found in Arabidopsis thaliana (Mouse-ear cress).